We begin with the raw amino-acid sequence, 518 residues long: Probable pectinesterase/pectinesterase inhibitor 16 (518 aa).

The signal sequence occupies residues 1–33 (MASSSSISNHKIPNTLMFLVIVNFLYLIQTNSA). Residues 30–172 (TNSAVSISSN…TGLLTSSLDL (143 aa)) are pectinesterase inhibitor 16. N-linked (GlcNAc...) asparagine glycosylation is found at Asn82 and Asn161. The pectinesterase 16 stretch occupies residues 213 to 502 (DAVVAPDGSG…FTVASFIDGN (290 aa)). Residues Thr289 and Gln319 each coordinate substrate. The active-site Proton donor; for pectinesterase activity is Asp342. The Nucleophile; for pectinesterase activity role is filled by Asp363. Residues Arg422 and Trp424 each coordinate substrate.

This sequence in the N-terminal section; belongs to the PMEI family. In the C-terminal section; belongs to the pectinesterase family. In terms of tissue distribution, expressed in siliques and floral stems.

The protein resides in the secreted. It localises to the cell wall. It carries out the reaction [(1-&gt;4)-alpha-D-galacturonosyl methyl ester](n) + n H2O = [(1-&gt;4)-alpha-D-galacturonosyl](n) + n methanol + n H(+). It functions in the pathway glycan metabolism; pectin degradation; 2-dehydro-3-deoxy-D-gluconate from pectin: step 1/5. Its function is as follows. Acts in the modification of cell walls via demethylesterification of cell wall pectin. The sequence is that of Probable pectinesterase/pectinesterase inhibitor 16 (PME16) from Arabidopsis thaliana (Mouse-ear cress).